The chain runs to 83 residues: Large ribosomal subunit protein uL23 (83 aa).

The protein belongs to the universal ribosomal protein uL23 family. As to quaternary structure, part of the 50S ribosomal subunit. Contacts protein L29.

Binds to 23S rRNA. One of the proteins that surrounds the polypeptide exit tunnel on the outside of the ribosome. This chain is Large ribosomal subunit protein uL23, found in Thermoplasma volcanium (strain ATCC 51530 / DSM 4299 / JCM 9571 / NBRC 15438 / GSS1).